The following is a 284-amino-acid chain: Gigasin-3a (284 aa).

Residues 202 to 284 (GLDNPLPNPR…FKAGRKNNRN (83 aa)) are disordered. A compositionally biased stretch (low complexity) spans 223–245 (SSPLPESTPKSSTKTSSASPIKS). Residues 246 to 257 (RQGKKLRGKKQN) show a composition bias toward basic residues. A compositionally biased stretch (polar residues) spans 258–267 (KTGNTRFTYR). Positions 268–284 (NNKRNIKFKAGRKNNRN) are enriched in basic residues.

As to expression, component of the organic matrix of calcified shell layers.

The polypeptide is Gigasin-3a (Magallana gigas (Pacific oyster)).